The following is a 200-amino-acid chain: LexA repressor (200 aa).

The H-T-H motif DNA-binding region spans 29–48; that stretch reads IRDIARAFRITPRGAIVHLN. Residues Ser120 and Lys158 each act as for autocatalytic cleavage activity in the active site.

Belongs to the peptidase S24 family. As to quaternary structure, homodimer.

It carries out the reaction Hydrolysis of Ala-|-Gly bond in repressor LexA.. In terms of biological role, represses a number of genes involved in the response to DNA damage (SOS response), including recA and lexA. In the presence of single-stranded DNA, RecA interacts with LexA causing an autocatalytic cleavage which disrupts the DNA-binding part of LexA, leading to derepression of the SOS regulon and eventually DNA repair. The sequence is that of LexA repressor from Pseudothermotoga lettingae (strain ATCC BAA-301 / DSM 14385 / NBRC 107922 / TMO) (Thermotoga lettingae).